The sequence spans 445 residues: NAD(P)H coenzyme A polysulfide/persulfide reductase (445 aa).

16-17 (AA) is a binding site for FAD. CoA is bound at residue arginine 27. Residues 38-39 (EA) and 45-47 (HAP) each bind FAD. CoA is bound by residues 44–48 (SHAPC), 65–66 (YY), and arginine 75. The active-site Redox-active is cysteine 48. Residues valine 85, aspartate 283, and alanine 301 each contribute to the FAD site. Residues asparagine 305 and lysine 361 each coordinate CoA. FAD is bound at residue tyrosine 425. CoA-binding residues include tryptophan 433 and arginine 441.

Belongs to the class-III pyridine nucleotide-disulfide oxidoreductase family. In terms of assembly, homodimer. Homotetramer. It depends on FAD as a cofactor.

It catalyses the reaction NADP(+) + 2 CoA = CoA-disulfide + NADPH + H(+). The catalysed reaction is NAD(+) + 2 CoA = CoA-disulfide + NADH + H(+). Catalyzes the NAD(P)H-dependent reduction of polysulfide, CoA-polysulfides, and CoA persulfide, as well as the reduction of a range of other small persulfides, including TNB and glutathione persulfides. The likely in vivo substrates are di-, poly-, and persulfide derivatives of coenzyme A, although polysulfide itself is also efficiently reduced. Shows coenzyme A disulfide reductase (CoADR) activity with both NADH and NADPH, with a preference for NADPH. May also play a role in the reduction of elemental sulfur. The sequence is that of NAD(P)H coenzyme A polysulfide/persulfide reductase from Pyrococcus horikoshii (strain ATCC 700860 / DSM 12428 / JCM 9974 / NBRC 100139 / OT-3).